We begin with the raw amino-acid sequence, 123 residues long: Large ribosomal subunit protein bL19 (123 aa).

It belongs to the bacterial ribosomal protein bL19 family.

Functionally, this protein is located at the 30S-50S ribosomal subunit interface and may play a role in the structure and function of the aminoacyl-tRNA binding site. This chain is Large ribosomal subunit protein bL19, found in Ruegeria sp. (strain TM1040) (Silicibacter sp.).